The chain runs to 155 residues: MSSQKGNVTRSRPQKHQNTFTFKNDKFDKSVQTKKINAKLHDGVCQRCKEVLEWRVKYSKYKPLSKPKKCVKCLQKTVKDSYHIMCRPCACELEVCAKCGKKEEIVIPFNKEPDAPENTENEGSGHRRRCGRKEDSDEDLDAESDSDGEDGDTQA.

2 disordered regions span residues 1–22 and 110–155; these read MSSQ…TFTF and NKEP…DTQA. An N-acetylserine modification is found at Ser2. 3 positions are modified to phosphoserine: Ser136, Ser144, and Ser146. A compositionally biased stretch (acidic residues) spans 136–155; the sequence is SDEDLDAESDSDGEDGDTQA.

This is an uncharacterized protein from Mus musculus (Mouse).